The sequence spans 427 residues: Trigger factor (427 aa).

The region spanning 163 to 248 (GDTVVIDFVG…IHEVKAKEVP (86 aa)) is the PPIase FKBP-type domain.

The protein belongs to the FKBP-type PPIase family. Tig subfamily.

It is found in the cytoplasm. The enzyme catalyses [protein]-peptidylproline (omega=180) = [protein]-peptidylproline (omega=0). Functionally, involved in protein export. Acts as a chaperone by maintaining the newly synthesized protein in an open conformation. Functions as a peptidyl-prolyl cis-trans isomerase. The protein is Trigger factor of Streptococcus pneumoniae (strain ATCC 700669 / Spain 23F-1).